The sequence spans 489 residues: MAHSTAGDRDPEVGSEQHSSIAQLHTESMSDPWGDSNSPENPLNWPAPKKNFHVAIVSIFTLTANLAATMFAPGAPQLAKEFNITNSTVEAMTVSLYVLGFAFGPLLLAPLSELYGRLIIYNACNAVYIAFTVGCAFSTNVSMFLVFRFLCGCAASGPMSIGGGTVADITPQEERGKAMALFAMGPLLGPVLGPIIGGYVSQYTNWRWTFRIILIMSGIIGLATMFFMRETNAAVLLRRKAKRSPKDAEGMELELDKTKKETPSQVLVRAITRPFKMLLFSPIVLLISLYTGVLFGLIFLLFTTFPTVFQGVYGFDEGTSGLAYLGLGIGMFLGLVVFSILSDKLLGQKQGGTVSKPEQRLILMKWFGPITPLGCFMYGWSAYHHVHWIVPILGTSIIGFGSLFVVIPGQIYLVDSFGAEAAASALAANLLVRSPFGAFLGLVAAPLYDRLSLGWGNSVLGFITLAFTPVPWLFYRYGETLRTRFVVKL.

The segment covering 1–12 (MAHSTAGDRDPE) has biased composition (basic and acidic residues). The interval 1 to 42 (MAHSTAGDRDPEVGSEQHSSIAQLHTESMSDPWGDSNSPENP) is disordered. A compositionally biased stretch (polar residues) spans 16-41 (EQHSSIAQLHTESMSDPWGDSNSPEN). A helical membrane pass occupies residues 52–72 (FHVAIVSIFTLTANLAATMFA). N83 and N86 each carry an N-linked (GlcNAc...) asparagine glycan. Helical transmembrane passes span 91–111 (AMTV…LAPL), 127–147 (VYIA…FLVF), 149–169 (FLCG…VADI), 180–200 (ALFA…GGYV), 208–228 (WTFR…MFFM), 282–302 (PIVL…FLLF), 321–341 (GLAY…FSIL), 361–381 (LILM…YGWS), 388–408 (WIVP…VVIP), 425–445 (ALAA…LVAA), and 454–474 (GWGN…PWLF).

It belongs to the major facilitator superfamily.

Its subcellular location is the cell membrane. In terms of biological role, MFS-type efflux pump involved in the modulation susceptibility to various compounds including cumyl hydroperoxide, potassium superoxide, many singlet oxygen-generating compounds (eosin Y, rose Bengal, hematoporphyrin, methylene blue, and cercosporin), and the cell wall biosynthesis inhibitor Congo red. Involved in oxidative stress tolerance, colonization, and lesion formation. This is MFS-type transporter MFS19 from Alternaria alternata (Alternaria rot fungus).